The sequence spans 927 residues: Translation initiation factor IF-2 (927 aa).

The segment at 27–337 is disordered; sequence LGLPVKSHAS…GAPKPVTERK (311 aa). Over residues 49 to 69 the composition is skewed to polar residues; it reads SFSSSKTKAPTNSVQTNQGVK. 2 stretches are compositionally biased toward basic and acidic residues: residues 70 to 86 and 101 to 138; these read TESK…DDKP and FKAE…DRRH. Over residues 146–159 the composition is skewed to low complexity; it reads GNRNDNRQGQQNNR. Basic and acidic residues-rich tracts occupy residues 160-171, 202-226, and 234-257; these read NKNDGRYADHKQ, YSRH…EQEL, and AQEE…KEIV. The segment covering 300–316 has biased composition (low complexity); that stretch reads NWNNQNQVRNQRNSNWN. Residues 428 to 597 enclose the tr-type G domain; sequence ERPPVVTIMG…LLVAEMEELK (170 aa). Positions 437-444 are G1; the sequence is GHVDHGKT. 437–444 provides a ligand contact to GTP; that stretch reads GHVDHGKT. The interval 462–466 is G2; that stretch reads GITQH. The interval 483–486 is G3; the sequence is DTPG. Residues 483-487 and 537-540 contribute to the GTP site; these read DTPGH and NKID. The interval 537-540 is G4; the sequence is NKID. A G5 region spans residues 573-575; that stretch reads SAK.

It belongs to the TRAFAC class translation factor GTPase superfamily. Classic translation factor GTPase family. IF-2 subfamily.

The protein resides in the cytoplasm. In terms of biological role, one of the essential components for the initiation of protein synthesis. Protects formylmethionyl-tRNA from spontaneous hydrolysis and promotes its binding to the 30S ribosomal subunits. Also involved in the hydrolysis of GTP during the formation of the 70S ribosomal complex. The sequence is that of Translation initiation factor IF-2 from Streptococcus agalactiae serotype V (strain ATCC BAA-611 / 2603 V/R).